Here is a 1886-residue protein sequence, read N- to C-terminus: MARASLIQPGLWALLLLQAVGPAVAAKLNIPKVLLPFTRATRVNFTLEASEGCYRWSSTRPEVASIEPLGSSEQQCSQKAVVQARLTQPARLTSIIFAEDITTGQVLRCDAIVDLIHGIQIVSTTRELYLEDSPLELKIQALDSEGNTFSTLAGLVFDWTIVKDTEANGFSDSHNALRILTFLESTYIPPSYISEMEKAAKQGDTILVSGMKTGSSKLKARIQEAVYKNVRPAEVRLLILENILLNPAYDVYLLVGTSIHYKVQKIRQGKITELSMPSDQYELQLQNSIPDPQGDPARPVAVLTQDTSRVTAMQMGQSNLVLGHRSIRMQGASRLPNSTIYVVEAGYLGFTVHPGDRWVLETGHLYAVTIEVFDRSSNKVYPSDNIRIEAVFPAEFFEVLSSSQNGSYHHVRAIQSGQTTISASLTSVVDQDGGVHVLQVPVWNQQEVDIHIPITLYPSILTFPWQPKTGAYQYTIKAHGGSGNFTWSSSSYMVATVTVKGVMTTGGDTGLSVIRAHDVQNPLHFGEMKVYVIEPSSMEFAPCQVEARVGHTLELPLTISGLMPGGSSEVVTLSDCSHFDLVVEVENQGVFQPLPGRLPPGPEHCSGVKVRADAQGSTTLLVSYTHGHVHLGAKITLAAYLPLKAVDPSSVAVVTLGSSKEMLFEGGPRPWVLEPSKFFRNVTSEDTGSISLSLLGPPASRNYQQHRVLVTCQALGEQVIALSVGNRPSLSNPFPAVEPTVVKSVCAPPSRLTLMPVYALPQLDLSCPLLQQNKQVVPVSSHRNPLLDLGAYDQQGRRFDNFSSLSIQWESFRPLLASIEVDQPMQLVSQDDGNGQKKLHGLQTVSVHEASGTTAISATATGYQQSHLSAAGVKQLRDPLVPVSASIELILVEDVRVSPEEVTIYNHPGVQVELHITEGSGYFFLNTSTQDIINVAYQDTRGVAMVHPLFPGSSTVMVHDLCLTFPAPAKATIHVSDIQELYVRVVDKVEIGKAVKAYVRVLDFYKKPFLAKYFTFMDLKLRAASQIITLVTLDEALDNYTATFLVHGVAIGQTSLSASVTDKSGQRVSSTAQQIEVFPPFRLIPRKVTLIIGAMIQITSEGGPQPQSNILFSINNESVAAVSSAGLVRGLMVGNGSVLGVVQAVDAETGKVIIVSQDHVEVEVLQLQAVRIRAPITRMRTGTQMPVYVTGITSNQSPFSFGNAVPGLTFHWSVTKRDVLDLRGRHHEVSIRLSPQYNFAMNVHGRVKGRTGLRVVVKALDPTAGQLHGLGKELSDEIQIQVFEKLRLLNPEVEAEQILMSPNSFIKLQTNRDGAAILSYRVLDGPEKAPIVHIDEKGFLVSGSGIGVSTLEVIAQEPFGTNQTVLVAVKVSPISYLRISMSPVLHTQHKEVLTALPLGMTVTFTVHFHDSSGDIFHAHNSDLNFATNRDDFVQIGKGATNNTCIIRTVSVGLTLLHVWDVEHLGLSDFVPLPVLQAITPELSGAVVVGDILCLASVLISLGGVSGTWSSSAGNVLYVDPKTGVAIARDAGPVTVYYEIAGHLKTFKEIVVVTPQKIVARRLHATQTSIQEATASKVTVSVGDRSSNLLGECSSAQREAIEALHPESLISCQLQFKQDVFDFPARDIFSVEPGFDTALGQYLCSVTMHRLTDKQLKHLNMKKTSLAVTASMPSSRTSVEKVGAEVPFSPGLYANQAEILLSNHYPSSEVKIFGAVEILENLEVRSGSPAVLASVKEKSFGLPSFITYTVGVLDPTAGSQGPLSTALTFSSPATNQAITIPVTVAFVLDRRGPGPYGASLLSHFLDSYQVMFFTFFALLAGTAVTIIAYHTVCAPRELASPLALTPHASPQHSPHYLASSPTAFNTLPSDRKASPPSGLWSPAYASH.

A signal peptide spans M1 to A25. Topologically, residues A26–D1805 are perinuclear space. Residues N337, N484, N681, and N1039 are each glycosylated (N-linked (GlcNAc...) asparagine). Residues F1078–K1151 enclose the BIG2 domain. The chain crosses the membrane as a helical span at residues S1806–Y1828. Topologically, residues H1829 to H1886 are cytoplasmic. S1839 is subject to Phosphoserine. T1844 is modified (phosphothreonine). The tract at residues L1866–H1886 is disordered. Phosphoserine occurs at positions 1873, 1876, 1880, and 1885.

Belongs to the NUP210 family. As to quaternary structure, forms dimers and possibly higher-order oligomers. N-glycosylated, but not all potential glycosylation sites may be used. Contains high-mannose type oligosaccharides. Post-translationally, phosphorylated at Ser-1880 in mitosis specifically; not phosphorylated in interphase.

Its subcellular location is the nucleus. It localises to the nuclear pore complex. The protein resides in the nucleus membrane. It is found in the endoplasmic reticulum membrane. In terms of biological role, nucleoporin essential for nuclear pore assembly and fusion, nuclear pore spacing, as well as structural integrity. The chain is Nuclear pore membrane glycoprotein 210 (Nup210) from Rattus norvegicus (Rat).